A 188-amino-acid polypeptide reads, in one-letter code: MMGMIIIVPIGEVPGDVLAFLQNSLSGFYAKYGIEVRLVGGLSLSKFQHAFDFERRQFLARYFLPVLSYIRKDFNAKAALGVVNVDIYELGLNFIFGLAHPGLRVAIISLYRLYPEFYGNPPDRKLLKERALKEAMHELGHVFGLEHCPNPKCVMHFSNSIIDTDIKSWMYCEKCLRKLEKNLTRSYV.

A Zn(2+)-binding site is contributed by H137. The active-site Proton acceptor is E138. Zn(2+)-binding residues include H141, H147, C148, C153, C172, and C175.

This sequence belongs to the peptidase M54 family. As to quaternary structure, monomer. It depends on Zn(2+) as a cofactor.

Its function is as follows. Probable zinc metalloprotease whose natural substrate is unknown. The sequence is that of Archaemetzincin from Pyrococcus abyssi (strain GE5 / Orsay).